A 374-amino-acid polypeptide reads, in one-letter code: MAANKDYYDILGVSKDASDDEIKKAYRKLSKKYHPDINKAPDAEQKFKDVNEAYEVLGDSQKRAQYDQFGSADPNAGFGGGGFGGQGGFSDFGGGFEDIFGSFFGGGQRQSPNQPRQGEDLQYQMSLKFEEAIFGKKTTIKYSREALCKTCGGSGAKEGTSPVTCHKCNGTGTIQVTQNTPLGRMVRQQTCDVCNGTGKEIKEKCPTCGGTGHTSQQHEVKVSVPAGVEDGQQMRLQGQGEAGFNGGPYGDLYIIFQVQPSDMYERDGSEIYYNQTISFVQAALGDEIEVPTVHGKVKLKVPAGTQTGTNFRLKGKGAPRLRGNGTGDQHVKVKVTVPKKLNSGQKEALKQFAKASGEEPSGHGKSGFFDKFMN.

The J domain maps to 6–70 (DYYDILGVSK…QKRAQYDQFG (65 aa)). The CR-type zinc finger occupies 135 to 217 (GKKTTIKYSR…CGGTGHTSQQ (83 aa)). Zn(2+) contacts are provided by Cys148, Cys151, Cys165, Cys168, Cys191, Cys194, Cys205, and Cys208. 4 CXXCXGXG motif repeats span residues 148–155 (CKTCGGSG), 165–172 (CHKCNGTG), 191–198 (CDVCNGTG), and 205–212 (CPTCGGTG). Disordered regions lie at residues 308 to 328 (GTNF…GTGD) and 347 to 374 (EALK…KFMN).

The protein belongs to the DnaJ family. Homodimer. It depends on Zn(2+) as a cofactor.

The protein resides in the cytoplasm. Its function is as follows. Participates actively in the response to hyperosmotic and heat shock by preventing the aggregation of stress-denatured proteins and by disaggregating proteins, also in an autonomous, DnaK-independent fashion. Unfolded proteins bind initially to DnaJ; upon interaction with the DnaJ-bound protein, DnaK hydrolyzes its bound ATP, resulting in the formation of a stable complex. GrpE releases ADP from DnaK; ATP binding to DnaK triggers the release of the substrate protein, thus completing the reaction cycle. Several rounds of ATP-dependent interactions between DnaJ, DnaK and GrpE are required for fully efficient folding. Also involved, together with DnaK and GrpE, in the DNA replication of plasmids through activation of initiation proteins. The polypeptide is Chaperone protein DnaJ (Pediococcus pentosaceus (strain ATCC 25745 / CCUG 21536 / LMG 10740 / 183-1w)).